Consider the following 366-residue polypeptide: Aminomethyltransferase (366 aa).

The protein belongs to the GcvT family. As to quaternary structure, the glycine cleavage system is composed of four proteins: P, T, L and H.

It carries out the reaction N(6)-[(R)-S(8)-aminomethyldihydrolipoyl]-L-lysyl-[protein] + (6S)-5,6,7,8-tetrahydrofolate = N(6)-[(R)-dihydrolipoyl]-L-lysyl-[protein] + (6R)-5,10-methylene-5,6,7,8-tetrahydrofolate + NH4(+). Functionally, the glycine cleavage system catalyzes the degradation of glycine. The polypeptide is Aminomethyltransferase (Bacillus cereus (strain B4264)).